A 196-amino-acid chain; its full sequence is FMN-dependent NADH:quinone oxidoreductase (196 aa).

FMN is bound at residue Ser-10.

Belongs to the azoreductase type 1 family. Homodimer. FMN serves as cofactor.

The catalysed reaction is 2 a quinone + NADH + H(+) = 2 a 1,4-benzosemiquinone + NAD(+). It carries out the reaction N,N-dimethyl-1,4-phenylenediamine + anthranilate + 2 NAD(+) = 2-(4-dimethylaminophenyl)diazenylbenzoate + 2 NADH + 2 H(+). Its function is as follows. Quinone reductase that provides resistance to thiol-specific stress caused by electrophilic quinones. Also exhibits azoreductase activity. Catalyzes the reductive cleavage of the azo bond in aromatic azo compounds to the corresponding amines. This Cereibacter sphaeroides (strain ATCC 17029 / ATH 2.4.9) (Rhodobacter sphaeroides) protein is FMN-dependent NADH:quinone oxidoreductase.